The primary structure comprises 377 residues: Trichodiene synthase (377 aa).

Belongs to the trichodiene synthase family.

The catalysed reaction is (2E,6E)-farnesyl diphosphate = trichodiene + diphosphate. It functions in the pathway sesquiterpene biosynthesis; trichothecene biosynthesis. Functionally, TS is a member of the terpene cyclase group of enzymes. It catalyzes the isomerization and cyclization of farnesyl pyro-phosphate to form trichodiene, the first cyclic intermediate in the biosynthetic pathway for trichothecenes. It serves to branch trichothecene biosynthesis from the isoprenoid pathway. In Fusarium poae, this protein is Trichodiene synthase (TRI5).